A 222-amino-acid polypeptide reads, in one-letter code: Tegument protein UL26 (222 aa).

This sequence belongs to the herpesviridae US22 family. Interacts with UL25. Interacts with ISGylation machinery components ISG15, UBA7 and HERC5; these interactions inhibit global protein ISGylation. In terms of processing, ISGylated; ISGylation regulates UL26 stability and inhibits its activities to suppress NF-kappa-B signaling.

The protein resides in the virion tegument. The protein localises to the host nucleus. In terms of biological role, plays a role in the inhibition of host NF-kappa-B. This inhibition affects both the canonical and the non-canonical pathways. Blocks the induction of host IKK phosphorylation. May also influence the normal phosphorylation state of several tegument proteins including pp28 in virions. Also suppresses virus-induced ISGylation independent of its own ISGylation. The sequence is that of Tegument protein UL26 (UL26) from Homo sapiens (Human).